The following is a 391-amino-acid chain: Lipid-A-disaccharide synthase (391 aa).

The protein belongs to the LpxB family.

The enzyme catalyses a lipid X + a UDP-2-N,3-O-bis[(3R)-3-hydroxyacyl]-alpha-D-glucosamine = a lipid A disaccharide + UDP + H(+). Its pathway is bacterial outer membrane biogenesis; LPS lipid A biosynthesis. Condensation of UDP-2,3-diacylglucosamine and 2,3-diacylglucosamine-1-phosphate to form lipid A disaccharide, a precursor of lipid A, a phosphorylated glycolipid that anchors the lipopolysaccharide to the outer membrane of the cell. The polypeptide is Lipid-A-disaccharide synthase (Aromatoleum aromaticum (strain DSM 19018 / LMG 30748 / EbN1) (Azoarcus sp. (strain EbN1))).